The primary structure comprises 258 residues: Thrombin-like enzyme CPI-enzyme 2 (258 aa).

A signal peptide spans 1-18 (MVLIRVLANLLILQLSYA). The propeptide occupies 19 to 24 (QKSSEL). In terms of domain architecture, Peptidase S1 spans 25-249 (VIGGDECNIN…YTDWIENIIA (225 aa)). 6 disulfides stabilise this stretch: Cys-31–Cys-163, Cys-50–Cys-66, Cys-98–Cys-256, Cys-142–Cys-210, Cys-174–Cys-189, and Cys-200–Cys-225. N-linked (GlcNAc...) asparagine glycosylation is present at Asn-44. The Charge relay system role is filled by His-65. Asn-79 and Asn-103 each carry an N-linked (GlcNAc...) asparagine glycan. Asp-110 functions as the Charge relay system in the catalytic mechanism. A glycan (N-linked (GlcNAc...) asparagine) is linked at Asn-121. The Charge relay system role is filled by Ser-204.

The protein belongs to the peptidase S1 family. Snake venom subfamily. In terms of assembly, monomer. Post-translationally, N-glycosylated. Expressed by the venom gland.

Its subcellular location is the secreted. In terms of biological role, thrombin-like snake venom serine protease that cleaves fibrinogen beta (FGB) releasing fibrinopeptide B. Promotes capillary permeability-increasing activity through the release of peptides from the beta-chain of fibrinogen. The chain is Thrombin-like enzyme CPI-enzyme 2 from Gloydius ussuriensis (Ussuri mamushi).